Reading from the N-terminus, the 667-residue chain is Protein-glutamine gamma-glutamyltransferase 4 (667 aa).

Residues Asn-151, Asn-220, and Asn-227 are each glycosylated (N-linked (GlcNAc...) asparagine). Residues Cys-256, His-315, and Asp-338 contribute to the active site. Ca(2+) is bound by residues Asn-378 and Asp-380. The N-linked (GlcNAc...) asparagine glycan is linked to Asn-408. Glu-430 and Glu-435 together coordinate Ca(2+). Residues 430 to 449 (EGSPEERKAMEKASGKRPDD) are disordered. 2 N-linked (GlcNAc...) asparagine glycosylation sites follow: Asn-472 and Asn-488.

This sequence belongs to the transglutaminase superfamily. Transglutaminase family. Homodimer. Ca(2+) serves as cofactor. Post-translationally, the N-terminus is blocked. Probably linked to the cell membrane via a lipid-anchor, possibly a GPI-anchor. In terms of processing, N-glycosylated on 2 Asn residues by a high mannose oligosaccharide consisting of five mannose residues and a fucosylated biantennary complex glycan. In terms of tissue distribution, expressed in the coagulating gland, the dorsal part of the prostate and in semen (at protein level). Expressed at low levels in the lateral prostate and seminal vesicle. Not expressed in the epididymis, kidney, liver, serum, sperm plug, testes and ventral prostate.

The protein localises to the secreted. The protein resides in the cell membrane. The catalysed reaction is L-glutaminyl-[protein] + L-lysyl-[protein] = [protein]-L-lysyl-N(6)-5-L-glutamyl-[protein] + NH4(+). Functionally, associated with the mammalian reproductive process. Plays an important role in the formation of the seminal coagulum through the cross-linking of specific proteins present in the seminal plasma. Transglutaminase is also required to stabilize the copulatory plug. The polypeptide is Protein-glutamine gamma-glutamyltransferase 4 (Tgm4) (Rattus norvegicus (Rat)).